Consider the following 362-residue polypeptide: H-2 class I histocompatibility antigen, L-D alpha chain (362 aa).

The signal sequence occupies residues 1 to 24; it reads MGAMAPRTLLLLLAAALAPTQTRA. Residues 25–114 form an alpha-1 region; the sequence is GPHSMRYFET…LLGYYNQSAG (90 aa). Residues 25 to 309 are Extracellular-facing; the sequence is GPHSMRYFET…PPPSTDSYMV (285 aa). A glycan (N-linked (GlcNAc...) asparagine) is linked at N110. Residues 115–206 form an alpha-2 region; sequence GTHTLQWMYG…KNGNATLLRT (92 aa). C125 and C188 are disulfide-bonded. 2 N-linked (GlcNAc...) asparagine glycosylation sites follow: N200 and N280. An alpha-3 region spans residues 207–298; the sequence is DSPKAHVTHH…GLPEPLTLRW (92 aa). An Ig-like C1-type domain is found at 209–297; that stretch reads PKAHVTHHPR…EGLPEPLTLR (89 aa). C227 and C283 are joined by a disulfide. A connecting peptide region spans residues 299–309; sequence EPPPSTDSYMV. A helical transmembrane segment spans residues 310 to 331; the sequence is IVAVLGVLGAMAIIGAVVAFVM. At 332–362 the chain is on the cytoplasmic side; the sequence is KRRRNTGGKGGDYALAPGSQSSEMSLRDCKA. Residues 340–362 form a disordered region; sequence KGGDYALAPGSQSSEMSLRDCKA. Phosphoserine occurs at positions 353 and 356.

It belongs to the MHC class I family. Heterodimer of an alpha chain and a beta chain (beta-2-microglobulin).

It is found in the membrane. Its function is as follows. Involved in the presentation of foreign antigens to the immune system. The protein is H-2 class I histocompatibility antigen, L-D alpha chain (H2-L) of Mus musculus (Mouse).